The primary structure comprises 498 residues: Cytotardin (498 aa).

Residues 18–58 are coil 1A; sequence DRVHSKDELQALNTRLAKYIDKIRNLENENVALQRQLQTAE. Positions 22-378 constitute an IF rod domain; sequence SKDELQALNT…KLLSGEEQRL (357 aa). A linker 1 region spans residues 59–69; the sequence is QTTVTEIHRVS. A coil 1B region spans residues 70 to 213; it reads KNYDEELAKL…ENLREEKSQR (144 aa). The segment at 214-231 is linker 2; it reads QYLLHDLQRGLQDEFESK. The tract at residues 232 to 371 is coil 2; the sequence is LVQQLNELRA…AELATYNKLL (140 aa). Residues 381–425 form a disordered region; the sequence is DGSGTVIRRPTGGATGTGSGIYGGTGSGGYSRDIGSTTTTKTTYT. Residues 393–409 are compositionally biased toward gly residues; it reads GATGTGSGIYGGTGSGG.

The protein belongs to the intermediate filament family.

It is found in the cytoplasm. It localises to the cell cortex. Intermediate filament (IF) protein that forms both short filaments and extensive cytoskeletal networks which most likely are homomeric. Some of the cytotardin arrays display cage-like perinuclear structures, while others are located in the periphery close to the cell membrane. The entire tardigrade body is ensheathed by a grid of belt-like filaments formed by the cytotardin protein, which retain their integrity even in contracted specimens. The belt-like structures encircling each epidermal cell might help to resist the shearing forces that arise during freezing and thawing cycles, whereas the dense meshwork at the basis of each claw and around the stylets might provide the tissue stability necessary for locomotion and feeding. The chain is Cytotardin from Hypsibius exemplaris (Freshwater tardigrade).